Reading from the N-terminus, the 685-residue chain is Stromal interaction molecule 1 (685 aa).

A signal peptide spans 1 to 22 (MDVCARLALWLLWGLLLHQGQS). Residues 23–213 (LSHSHSEKNT…LLTRHNHLKD (191 aa)) lie on the Extracellular side of the membrane. The tract at residues 24 to 43 (SHSHSEKNTGASSGATSEES) is disordered. Positions 32–41 (TGASSGATSE) are enriched in low complexity. EF-hand domains follow at residues 64–97 (SFEA…EDLN) and 102–126 (TVKH…AWKA). Ca(2+) is bound by residues D76, D78, N80, D82, and E87. N-linked (GlcNAc...) asparagine glycans are attached at residues N131 and N171. Residues 132 to 200 (WTVDEVIQWL…QLKALDTVLF (69 aa)) enclose the SAM domain. Residues 214–234 (FMLVVSIVIGVGGCWFAYIQN) form a helical membrane-spanning segment. The Cytoplasmic portion of the chain corresponds to 235 to 685 (RYSKEHMKKM…LKIFKKPLKK (451 aa)). Residues 248–442 (LEGLHRAEQS…IEILCGFQIV (195 aa)) adopt a coiled-coil conformation. S257 carries the phosphoserine modification. An SOAR/CAD region spans residues 344 to 442 (PEALQKWLQL…IEILCGFQIV (99 aa)). Positions 475–483 (DDVDDMDEE) are contributes to fast Ca(2+)-dependent inactivation of CRAC channels. Residues 490–499 (MQSPSLQSSV) are compositionally biased toward low complexity. Residues 490–542 (MQSPSLQSSVRQRLTEPQHGLGSQRDLTHSDSESSLHTSDRQRVAPKPPQMGR) are disordered. Position 504 is a phosphothreonine (T504). Residue S512 is modified to Phosphoserine. Over residues 515-532 (DLTHSDSESSLHTSDRQR) the composition is skewed to basic and acidic residues. A Phosphothreonine modification is found at T517. Phosphoserine occurs at positions 519, 521, 523, 524, 567, 575, 602, 608, 618, 621, and 628. The segment at 596 to 685 (LMELNPSVPP…LKIFKKPLKK (90 aa)) is disordered. Low complexity predominate over residues 608 to 620 (SPLLDSSHSHSPS). The Microtubule tip localization signal motif lies at 642-645 (TRIP). The span at 655-666 (EEDNGSIGEETD) shows a compositional bias: acidic residues. The residue at position 660 (S660) is a Phosphoserine. Position 665 is a phosphothreonine (T665). S668 is subject to Phosphoserine. Positions 670 to 685 (GRKKFPLKIFKKPLKK) are enriched in basic residues. The required for generation of inwardly rectifying CRAC currents stretch occupies residues 672–685 (KKFPLKIFKKPLKK).

As to quaternary structure, monomer in the presence of Ca(2+). It oligomerizes in absence of Ca(2+). Forms homooligomers and heterooligomers with STIM2. Interacts with pore-forming subunits of CRAC channels, ORAI1, ORAI2 and ORAI3; this interaction is potentiated upon Ca(2+) store depletion. Interacts (via the transmembrane region and the SOAR/CAD domain) with SPPL3; the interaction promotes the binding of STIM1 to ORAI1. Interacts with ORAI1. Interacts with MAPRE1; probably required for targeting to the growing microtubule plus ends. Interacts with CRACR2A/EFCAB4B; the interaction is direct and takes place in absence of Ca(2+). Forms a complex with CRACR2A/EFCAB4B and ORAI1 at low concentration of Ca(2+), the complex dissociates at elevated Ca(2+) concentrations. Interacts with SARAF, promoting a slow inactivation of STIM1-dependent SOCE activity, possibly by facilitating the deoligomerization of STIM1. Interacts with EFHB; the interaction takes place upon Ca(2+)-store depletion and inhibits the association with SARAF. Interacts with ASPH. Interacts with SLC35G1; intracellular Ca(2+)-dependent. May interact with ATP1A1, ATP2A2, ATP2B1, ATP2B4, KPNB1 and XPO1; through SLC35G1. Interacts with TMEM203. Interacts with STIMATE, promoting STIM1 conformational switch. Interacts with TMEM178A. Interacts with CASQ1 (via C-terminal end and preferentially with the monomeric form); this interaction increases in response to a depletion of intracellular Ca(2+), decreases both STIM1 aggregation and clustering, interaction of STIM1 with ORAI1 and store-operated Ca(2+) entry (SOCE) activity. Interacts with ADCY8. Glycosylation is required for cell surface expression. Post-translationally, phosphorylated predominantly on Ser residues.

The protein resides in the cell membrane. It localises to the endoplasmic reticulum membrane. It is found in the sarcoplasmic reticulum. The protein localises to the cytoplasm. Its subcellular location is the cytoskeleton. Its function is as follows. Acts as a Ca(2+) sensor that gates two major inward rectifying Ca(2+) channels at the plasma membrane: Ca(2+) release-activated Ca(2+) (CRAC) channels and arachidonate-regulated Ca(2+)-selective (ARC) channels. Plays a role in mediating store-operated Ca(2+) entry (SOCE), a Ca(2+) influx following depletion of intracellular Ca(2+) stores. Upon Ca(2+) depletion, translocates from the endoplasmic reticulum to the plasma membrane where it activates CRAC channel pore-forming subunits ORA1, ORA2 and ORAI3 to generate sustained and oscillatory Ca(2+) entry. Involved in enamel formation. This is Stromal interaction molecule 1 from Rattus norvegicus (Rat).